The chain runs to 146 residues: Small ribosomal subunit protein bS6 (146 aa).

The segment at 106–146 (QAAATQRAAERRAQREAERNAAQAQSSASNQARTAATTSGK) is disordered. Basic and acidic residues predominate over residues 113–124 (AAERRAQREAER). Residues 125–146 (NAAQAQSSASNQARTAATTSGK) show a composition bias toward low complexity.

It belongs to the bacterial ribosomal protein bS6 family.

Functionally, binds together with bS18 to 16S ribosomal RNA. The sequence is that of Small ribosomal subunit protein bS6 from Oenococcus oeni (strain ATCC BAA-331 / PSU-1).